Here is a 380-residue protein sequence, read N- to C-terminus: SAM and SH3 domain-containing protein 3 (380 aa).

A disordered region spans residues Met1–Phe174. Over residues Leu22–Val41 the composition is skewed to low complexity. Phosphoserine is present on residues Ser27, Ser34, and Ser42. Thr61 carries the post-translational modification Phosphothreonine. A compositionally biased stretch (basic residues) spans Met84–Val93. Ser97 is subject to Phosphoserine. Thr103 is subject to Phosphothreonine. At Ser110 the chain carries Phosphoserine. Thr112 is subject to Phosphothreonine. Phosphoserine is present on residues Ser113 and Ser120. Residues Arg143–Ser158 are compositionally biased toward polar residues. The region spanning Pro173–Glu234 is the SH3 domain. The SAM domain occupies Pro252–Tyr316. Thr318 carries the post-translational modification Phosphothreonine. The span at Thr318–Thr327 shows a compositional bias: acidic residues. The disordered stretch occupies residues Thr318 to Pro380. Residue Ser320 is modified to Phosphoserine.

Belongs to the SASH family.

In terms of biological role, may function as a signaling adapter protein in lymphocytes. This chain is SAM and SH3 domain-containing protein 3, found in Bos taurus (Bovine).